Consider the following 182-residue polypeptide: MYKKLITFLFVIGAVASYSNNEYTPFNKLSVKLYIDGVDNIENSYTDDNNELVLNFKEYTISIITESCDVGFDSIDIDVINDYKIIDMYTIDSSTIQRRGHTCRISTKLSCHYDKYPYIHKYEGDERQYSITAEGKCYKGIKYEISMMNDDTLLRKHTLKIGFTYIFDRHGHSNTYYSKYDF.

Belongs to the orthopoxvirus OPG192 family.

The protein localises to the host endoplasmic reticulum. The sequence is that of Protein OPG192 (OPG192) from Cynomys gunnisoni (Gunnison's prairie dog).